The chain runs to 102 residues: NADH-quinone oxidoreductase subunit K (102 aa).

3 helical membrane-spanning segments follow: residues 6–26 (LEHG…GVMV), 30–50 (LLFM…AFVL), and 62–82 (VMFI…LAIV).

This sequence belongs to the complex I subunit 4L family. As to quaternary structure, NDH-1 is composed of 14 different subunits. Subunits NuoA, H, J, K, L, M, N constitute the membrane sector of the complex.

It is found in the cell inner membrane. It catalyses the reaction a quinone + NADH + 5 H(+)(in) = a quinol + NAD(+) + 4 H(+)(out). Functionally, NDH-1 shuttles electrons from NADH, via FMN and iron-sulfur (Fe-S) centers, to quinones in the respiratory chain. The immediate electron acceptor for the enzyme in this species is believed to be ubiquinone. Couples the redox reaction to proton translocation (for every two electrons transferred, four hydrogen ions are translocated across the cytoplasmic membrane), and thus conserves the redox energy in a proton gradient. This Acinetobacter baumannii (strain AB307-0294) protein is NADH-quinone oxidoreductase subunit K.